Consider the following 32-residue polypeptide: Delta-conotoxin-like CnVIB (32 aa).

3 disulfide bridges follow: cysteine 3-cysteine 18, cysteine 10-cysteine 22, and cysteine 17-cysteine 27. 4-hydroxyproline is present on residues proline 6 and proline 14.

Belongs to the conotoxin O1 superfamily. Expressed by the venom duct.

It localises to the secreted. In terms of biological role, delta-conotoxins bind to site 6 of voltage-gated sodium channels (Nav) and inhibit the inactivation process. This toxin acts on Nav1.4/SCN4A and Nav1.6/SCN8A (EC(50)=2.3 uM). In Conus consors (Singed cone), this protein is Delta-conotoxin-like CnVIB.